A 302-amino-acid polypeptide reads, in one-letter code: Putative S-adenosyl-L-methionine-dependent methyltransferase MAP_1622c (302 aa).

Residues aspartate 129 and 158–159 (DL) contribute to the S-adenosyl-L-methionine site.

It belongs to the UPF0677 family.

Exhibits S-adenosyl-L-methionine-dependent methyltransferase activity. This chain is Putative S-adenosyl-L-methionine-dependent methyltransferase MAP_1622c, found in Mycolicibacterium paratuberculosis (strain ATCC BAA-968 / K-10) (Mycobacterium paratuberculosis).